A 353-amino-acid chain; its full sequence is Pleckstrin-2 (353 aa).

Met-1 carries the post-translational modification N-acetylmethionine. In terms of domain architecture, PH 1 spans 4 to 104 (GVLKEGFLVK…WAFEITGAIH (101 aa)). Ser-120 bears the Phosphoserine mark. In terms of domain architecture, DEP spans 139 to 225 (SNTGIRSSPN…DSTALYTFAE (87 aa)). One can recognise a PH 2 domain in the interval 247–353 (TVVKQGYLAK…EWIEAIKKLT (107 aa)).

The protein resides in the cell projection. Its subcellular location is the lamellipodium membrane. It localises to the cytoplasm. The protein localises to the cytoskeleton. Its function is as follows. May help orchestrate cytoskeletal arrangement. Contribute to lamellipodia formation. This is Pleckstrin-2 (PLEK2) from Homo sapiens (Human).